The sequence spans 89 residues: Large ribosomal subunit protein bL27 (89 aa).

Positions 1–21 are disordered; it reads MAHKKAGGSSRNGRDSKGKRL.

Belongs to the bacterial ribosomal protein bL27 family.

In Bradyrhizobium sp. (strain BTAi1 / ATCC BAA-1182), this protein is Large ribosomal subunit protein bL27.